Consider the following 200-residue polypeptide: Mediator of RNA polymerase II transcription subunit 22 (200 aa).

Residues 93–122 (SVNEAIDQRNQQLRALQEECDRKLITLRDE) are a coiled coil. Residues 167–200 (SAPLLASPETGAGPLQSAAPVHSHGGGPGPTEHT) form a disordered region. A compositionally biased stretch (gly residues) spans 190–200 (HGGGPGPTEHT).

This sequence belongs to the Mediator complex subunit 22 family. In terms of assembly, component of the Mediator complex, which is composed of MED1, MED4, MED6, MED7, MED8, MED9, MED10, MED11, MED12, MED13, MED13L, MED14, MED15, MED16, MED17, MED18, MED19, MED20, MED21, MED22, MED23, MED24, MED25, MED26, MED27, MED29, MED30, MED31, CCNC, CDK8 and CDC2L6/CDK11. The MED12, MED13, CCNC and CDK8 subunits form a distinct module termed the CDK8 module. Mediator containing the CDK8 module is less active than Mediator lacking this module in supporting transcriptional activation. Individual preparations of the Mediator complex lacking one or more distinct subunits have been variously termed ARC, CRSP, DRIP, PC2, SMCC and TRAP.

The protein localises to the nucleus. In terms of biological role, component of the Mediator complex, a coactivator involved in the regulated transcription of nearly all RNA polymerase II-dependent genes. Mediator functions as a bridge to convey information from gene-specific regulatory proteins to the basal RNA polymerase II transcription machinery. Mediator is recruited to promoters by direct interactions with regulatory proteins and serves as a scaffold for the assembly of a functional preinitiation complex with RNA polymerase II and the general transcription factors. The protein is Mediator of RNA polymerase II transcription subunit 22 (Med22) of Rattus norvegicus (Rat).